The following is a 432-amino-acid chain: Sphingosine N-acyltransferase-like protein ALT7 (432 aa).

Residues 55–75 form a helical membrane-spanning segment; that stretch reads IGLSLGSLLLLILMFTCLPYY. A glycan (N-linked (GlcNAc...) asparagine) is linked at N77. 7 helical membrane passes run 91-111, 128-148, 172-192, 226-246, 250-270, 273-293, and 338-358; these read FIFS…IYLL, FTEQ…GMYI, GLTK…IVVV, VGNV…FAKL, LGFQ…WLVA, GLYL…MPYG, and AFLG…GMIL. In terms of domain architecture, TLC spans 123 to 366; it reads KLMVRFTEQG…ILKVAYKVFQ (244 aa). The tract at residues 370–395 is disordered; the sequence is ADDTRSDSEESGYGTSDHEGDCYGAQ.

Belongs to the sphingosine N-acyltransferase family.

The protein localises to the membrane. The protein operates within mycotoxin biosynthesis. Functionally, sphingosine N-acyltransferase-like protein; part of the gene cluster that mediates the biosynthesis of the host-selective toxins (HSTs) AAL-toxins, sphinganine-analog mycotoxins responsible for Alternaria stem canker on tomato by the tomato pathotype. The biosynthesis starts with the polyketide synthase ALT1-catalyzed C-16 carbon chain assembly from one starter acetyl-CoA unit with malonyl-CoA extender units. ALT1 also selectively transfers methyl groups at the first and the third cycle of chain elongation for AAL toxin. The C-16 polyketide chain is released from the enzyme by a nucleophilic attack of a carbanion, which is derived from R-carbon of glycin by decarboxylation, on the carbonyl carbon of polyketide acyl chain. This step is probably catalyzed by a pyridoxal 5'-phosphate-dependent aminoacyl transferase ALT4. The respective functions of the other enzymes encoded by the cluster have still to be elucidated. The sphingosine N-acyltransferase-like protein ALT7 seems not to act as a resistance/self-tolerance factor against the toxin in the toxin biosynthetic gene cluster, contrary to what is expected. The protein is Sphingosine N-acyltransferase-like protein ALT7 of Alternaria alternata (Alternaria rot fungus).